A 243-amino-acid polypeptide reads, in one-letter code: Amphiregulin (243 aa).

The N-terminal stretch at 1–24 is a signal peptide; the sequence is MRTPSLSLALSVLSLLVLGSGHYA. The propeptide occupies 25-96; it reads AGLELNGTSS…IVDDSVRVEQ (72 aa). N-linked (GlcNAc...) asparagine glycosylation is present at Asn30. Polar residues predominate over residues 55 to 67; the sequence is STISEMPSGSELS. 2 disordered regions span residues 55–75 and 98–135; these read STIS…DYSE and IKPK…KKKN. Basic and acidic residues predominate over residues 98–113; sequence IKPKENKTEGEKSSEK. The N-linked (GlcNAc...) asparagine glycan is linked to Asn103. Over residues 114 to 135 the composition is skewed to basic residues; sequence PKRKKKGGKGGKGRRNRKKKKN. One can recognise an EGF-like domain in the interval 133–173; the sequence is KKNPCAAKFQNFCIHGECRYIENLEVVTCHCHQDYFGERCG. Cystine bridges form between Cys137–Cys150, Cys145–Cys161, and Cys163–Cys172. The chain crosses the membrane as a helical span at residues 190-213; that stretch reads IALAAIIVFVSAVSVAAIGIITAV. Asn236 carries an N-linked (GlcNAc...) asparagine glycan.

The protein belongs to the amphiregulin family. The immature precursor interacts with CNIH.

The protein resides in the membrane. Its function is as follows. Ligand of the EGF receptor/EGFR. Autocrine growth factor as well as a mitogen for a broad range of target cells including astrocytes, Schwann cells and fibroblasts. The chain is Amphiregulin (Areg) from Rattus norvegicus (Rat).